The primary structure comprises 253 residues: Methionine aminopeptidase A (253 aa).

Residue His-80 coordinates substrate. Residues Asp-98, Asp-109, and His-172 each coordinate a divalent metal cation. Residue His-179 coordinates substrate. A divalent metal cation contacts are provided by Glu-205 and Glu-236.

This sequence belongs to the peptidase M24A family. Methionine aminopeptidase type 1 subfamily. In terms of assembly, monomer. The cofactor is Co(2+). Zn(2+) is required as a cofactor. It depends on Mn(2+) as a cofactor. Fe(2+) serves as cofactor.

The catalysed reaction is Release of N-terminal amino acids, preferentially methionine, from peptides and arylamides.. Its function is as follows. Removes the N-terminal methionine from nascent proteins. The N-terminal methionine is often cleaved when the second residue in the primary sequence is small and uncharged (Met-Ala-, Cys, Gly, Pro, Ser, Thr, or Val). Requires deformylation of the N(alpha)-formylated initiator methionine before it can be hydrolyzed. This chain is Methionine aminopeptidase A, found in Synechocystis sp. (strain ATCC 27184 / PCC 6803 / Kazusa).